The sequence spans 292 residues: tRNA pseudouridine synthase B (292 aa).

Aspartate 38 serves as the catalytic Nucleophile.

The protein belongs to the pseudouridine synthase TruB family. Type 1 subfamily.

It catalyses the reaction uridine(55) in tRNA = pseudouridine(55) in tRNA. Functionally, responsible for synthesis of pseudouridine from uracil-55 in the psi GC loop of transfer RNAs. The protein is tRNA pseudouridine synthase B of Streptococcus sanguinis (strain SK36).